The sequence spans 369 residues: Phosphoribosyl pyrophosphate synthase-associated protein 2 (369 aa).

Met-1 is modified (N-acetylmethionine). 3 positions are modified to phosphoserine: Ser-219, Ser-227, and Ser-233.

The protein belongs to the ribose-phosphate pyrophosphokinase family. Binds to PRPS1 and PRPS2.

Its function is as follows. Seems to play a negative regulatory role in 5-phosphoribose 1-diphosphate synthesis. This is Phosphoribosyl pyrophosphate synthase-associated protein 2 (Prpsap2) from Mus musculus (Mouse).